The chain runs to 325 residues: Biotin synthase (325 aa).

Residues 52–281 (YQKDDVVLCS…AKPLLICGGR (230 aa)) enclose the Radical SAM core domain. 3 residues coordinate [4Fe-4S] cluster: cysteine 70, cysteine 74, and cysteine 77. [2Fe-2S] cluster-binding residues include serine 114, cysteine 146, and cysteine 206.

The protein belongs to the radical SAM superfamily. Biotin synthase family. As to quaternary structure, homodimer. [4Fe-4S] cluster is required as a cofactor. It depends on [2Fe-2S] cluster as a cofactor.

It carries out the reaction (4R,5S)-dethiobiotin + (sulfur carrier)-SH + 2 reduced [2Fe-2S]-[ferredoxin] + 2 S-adenosyl-L-methionine = (sulfur carrier)-H + biotin + 2 5'-deoxyadenosine + 2 L-methionine + 2 oxidized [2Fe-2S]-[ferredoxin]. Its pathway is cofactor biosynthesis; biotin biosynthesis; biotin from 7,8-diaminononanoate: step 2/2. In terms of biological role, catalyzes the conversion of dethiobiotin (DTB) to biotin by the insertion of a sulfur atom into dethiobiotin via a radical-based mechanism. The sequence is that of Biotin synthase from Syntrophus aciditrophicus (strain SB).